The chain runs to 28 residues: Antibacterial protein LC3 (28 aa).

In terms of biological role, antibacterial activity against X.campestris, especially strain G, and P.solacearum PO1. In Bacillus subtilis, this protein is Antibacterial protein LC3.